The following is a 166-amino-acid chain: MTWTTPDLCDRFPEVAVAEPLFRHFGGRTTFSGPIATVRCVEDNSRIRELASTPGDGRVLVVDGQGSLRHALFGDQIGAQAVANGWAGVLIHGCVRDVEILAGLPLGVLALAACPRRTERRDLGDVDVPVNFAGVAFVPGHWLYADANGVVVAAAPLSLEVVGMEH.

Substrate-binding positions include 74–77 (GDQI) and R96. Position 97 (D97) interacts with a divalent metal cation.

This sequence belongs to the class II aldolase/RraA-like family. Homotrimer. A divalent metal cation serves as cofactor.

The catalysed reaction is 4-hydroxy-4-methyl-2-oxoglutarate = 2 pyruvate. It catalyses the reaction oxaloacetate + H(+) = pyruvate + CO2. Its function is as follows. Catalyzes the aldol cleavage of 4-hydroxy-4-methyl-2-oxoglutarate (HMG) into 2 molecules of pyruvate. Also contains a secondary oxaloacetate (OAA) decarboxylase activity due to the common pyruvate enolate transition state formed following C-C bond cleavage in the retro-aldol and decarboxylation reactions. The chain is Putative 4-hydroxy-4-methyl-2-oxoglutarate aldolase from Xanthomonas campestris pv. campestris (strain B100).